A 102-amino-acid chain; its full sequence is Large ribosomal subunit protein bL21 (102 aa).

Basic residues predominate over residues 77 to 88; it reads KPKKHTHTKQGH. Residues 77 to 102 form a disordered region; sequence KPKKHTHTKQGHRQPYTKVTINKINA. Positions 93 to 102 are enriched in polar residues; the sequence is TKVTINKINA.

Belongs to the bacterial ribosomal protein bL21 family. In terms of assembly, part of the 50S ribosomal subunit. Contacts protein L20.

In terms of biological role, this protein binds to 23S rRNA in the presence of protein L20. This chain is Large ribosomal subunit protein bL21, found in Limosilactobacillus reuteri (strain DSM 20016) (Lactobacillus reuteri).